We begin with the raw amino-acid sequence, 452 residues long: Oxygen-independent coproporphyrinogen III oxidase (452 aa).

In terms of domain architecture, Radical SAM core spans 45 to 278; that stretch reads LDPAVPISVY…ANLAAKMFTE (234 aa). Residue Y54 participates in S-adenosyl-L-methionine binding. 2 residues coordinate [4Fe-4S] cluster: C60 and C64. F66 contributes to the S-adenosyl-L-methionine binding site. C67 contributes to the [4Fe-4S] cluster binding site. S-adenosyl-L-methionine contacts are provided by residues G111, 112-113, E144, Q171, R183, D208, A242, and I328; that span reads GT.

This sequence belongs to the anaerobic coproporphyrinogen-III oxidase family. In terms of assembly, monomer. The cofactor is [4Fe-4S] cluster.

It is found in the cytoplasm. The catalysed reaction is coproporphyrinogen III + 2 S-adenosyl-L-methionine = protoporphyrinogen IX + 2 5'-deoxyadenosine + 2 L-methionine + 2 CO2. It functions in the pathway porphyrin-containing compound metabolism; protoporphyrin-IX biosynthesis; protoporphyrinogen-IX from coproporphyrinogen-III (AdoMet route): step 1/1. In terms of biological role, involved in the heme and chlorophyll biosynthesis. Catalyzes the anaerobic oxidative decarboxylation of propionate groups of rings A and B of coproporphyrinogen III to yield the vinyl groups in protoporphyrinogen IX. The sequence is that of Oxygen-independent coproporphyrinogen III oxidase (hemN) from Cereibacter sphaeroides (strain ATCC 17025 / ATH 2.4.3) (Rhodobacter sphaeroides).